The following is a 316-amino-acid chain: Ribosomal RNA small subunit methyltransferase H (316 aa).

S-adenosyl-L-methionine-binding positions include 35–37 (AGH), Asp-55, Phe-84, Asp-105, and Gln-112.

It belongs to the methyltransferase superfamily. RsmH family.

Its subcellular location is the cytoplasm. It carries out the reaction cytidine(1402) in 16S rRNA + S-adenosyl-L-methionine = N(4)-methylcytidine(1402) in 16S rRNA + S-adenosyl-L-homocysteine + H(+). Functionally, specifically methylates the N4 position of cytidine in position 1402 (C1402) of 16S rRNA. The sequence is that of Ribosomal RNA small subunit methyltransferase H from Streptococcus gordonii (strain Challis / ATCC 35105 / BCRC 15272 / CH1 / DL1 / V288).